The chain runs to 164 residues: Thiol peroxidase (164 aa).

Residues 17-162 (IKVGDTFPDF…YDEVLQAAQA (146 aa)) enclose the Thioredoxin domain. Cysteine 58 acts as the Cysteine sulfenic acid (-SOH) intermediate in catalysis. A disulfide bond links cysteine 58 and cysteine 92.

The protein belongs to the peroxiredoxin family. Tpx subfamily. Homodimer.

The catalysed reaction is a hydroperoxide + [thioredoxin]-dithiol = an alcohol + [thioredoxin]-disulfide + H2O. Functionally, thiol-specific peroxidase that catalyzes the reduction of hydrogen peroxide and organic hydroperoxides to water and alcohols, respectively. Plays a role in cell protection against oxidative stress by detoxifying peroxides. This chain is Thiol peroxidase, found in Clostridium acetobutylicum (strain ATCC 824 / DSM 792 / JCM 1419 / IAM 19013 / LMG 5710 / NBRC 13948 / NRRL B-527 / VKM B-1787 / 2291 / W).